Here is a 369-residue protein sequence, read N- to C-terminus: Putative FAD-dependent monooxygenase YetM (369 aa).

The signal sequence occupies residues 1–32; it reads MKHMLIAGGGIGGLSAAISLRKAGFSVTLCEA. FAD contacts are provided by residues Gly-12, 31 to 32, Val-126, and Asp-285; that span reads EA.

FAD serves as cofactor.

In Bacillus subtilis (strain 168), this protein is Putative FAD-dependent monooxygenase YetM (yetM).